Here is a 226-residue protein sequence, read N- to C-terminus: Urease accessory protein UreF (226 aa).

It belongs to the UreF family. In terms of assembly, ureD, UreF and UreG form a complex that acts as a GTP-hydrolysis-dependent molecular chaperone, activating the urease apoprotein by helping to assemble the nickel containing metallocenter of UreC. The UreE protein probably delivers the nickel.

It localises to the cytoplasm. Functionally, required for maturation of urease via the functional incorporation of the urease nickel metallocenter. The chain is Urease accessory protein UreF from Paraburkholderia xenovorans (strain LB400).